Here is a 129-residue protein sequence, read N- to C-terminus: Large ribosomal subunit protein bL12 (129 aa).

It belongs to the bacterial ribosomal protein bL12 family. Homodimer. Part of the ribosomal stalk of the 50S ribosomal subunit. Forms a multimeric L10(L12)X complex, where L10 forms an elongated spine to which 2 to 4 L12 dimers bind in a sequential fashion. Binds GTP-bound translation factors.

Forms part of the ribosomal stalk which helps the ribosome interact with GTP-bound translation factors. Is thus essential for accurate translation. This Synechococcus sp. (strain CC9605) protein is Large ribosomal subunit protein bL12.